Here is a 300-residue protein sequence, read N- to C-terminus: tRNA pseudouridine synthase B (300 aa).

D38 functions as the Nucleophile in the catalytic mechanism.

Belongs to the pseudouridine synthase TruB family. Type 1 subfamily.

The catalysed reaction is uridine(55) in tRNA = pseudouridine(55) in tRNA. Responsible for synthesis of pseudouridine from uracil-55 in the psi GC loop of transfer RNAs. The protein is tRNA pseudouridine synthase B of Dehalococcoides mccartyi (strain CBDB1).